Consider the following 593-residue polypeptide: MTSRRWFHPNITGVEAENLLLTRGVDGSFLARPSKSNPGDFTLSVRRNGAVTHIKIQNTGDYYDLYGGEKFATLAELVQYYMEHHGQLKEKNGDVIELKYPLNCADPTSERWFHGHLSGKEAEKLLTEKGKHGSFLVRESQSHPGDFVLSVRTGDDKGESNDGKSKVTHVMIRCQELKYDVGGGERFDSLTDLVEHYKKNPMVETLGTVLQLKQPLNTTRINAAEIESRVRELSKLAETTDKVKQGFWEEFETLQQQECKLLYSRKEGQRQENKNKNRYKNILPFDHTRVVLHDGDPNEPVSDYINANIIMPEFETKCNNSKPKKSYIATQGCLQNTVNDFWRMVFQENSRVIVMTTKEVERGKSKCVKYWPDEYALKEYGVMRVRNVKESAAHDYTLRELKLSKVGQGNTERTVWQYHFRTWPDHGVPSDPGGVLDFLEEVHHKQESIVDAGPVVVHCSAGIGRTGTFIVIDILIDIIREKGVDCDIDVPKTIQMVRSQRSGMVQTEAQYRFIYMAVQHYIETLQRRIEEEQKSKRKGHEYTNIKYSLVDQTSGDQSPLPPCTPTPPCAEMREDSARVYENVGLMQQQRSFR.

Residue Thr2 is modified to N-acetylthreonine. SH2 domains are found at residues 6-102 (WFHP…KYPL) and 112-216 (WFHG…KQPL). Tyr62 and Tyr66 each carry phosphotyrosine. A Tyrosine-protein phosphatase domain is found at 247 to 521 (FWEEFETLQQ…RFIYMAVQHY (275 aa)). Residues Asp425, 459 to 465 (CSAGIGR), and Gln506 each bind substrate. Catalysis depends on Cys459, which acts as the Phosphocysteine intermediate. Tyr542 and Tyr580 each carry phosphotyrosine; by PDGFR.

This sequence belongs to the protein-tyrosine phosphatase family. Non-receptor class 2 subfamily. Interacts with CD84 and with phosphorylated SIT1 and MZPL1. Interacts with FCRL4, FCRL6 and ANKHD1. Interacts with GAREM1 (tyrosine phosphorylated); the interaction increases MAPK/ERK activity and does not affect the GRB2/SOS complex formation. Interacts with PTPNS1 and BCAR3. Interacts with phosphorylated LIME1. Interacts with SHB and INPP5D/SHIP1. Interacts with KIR2DL1; the interaction is enhanced by ARRB2. Interacts with GAB2. Interacts with TERT; the interaction retains TERT in the nucleus. Interacts with PECAM1 and FER. Interacts with EPHA2 (activated); participates in PTK2/FAK1 dephosphorylation in EPHA2 downstream signaling. Interacts with MILR1 (tyrosine phosphorylated). Interacts with FLT1 (tyrosine-phosphorylated), FLT3 (tyrosine-phosphorylated), FLT4 (tyrosine-phosphorylated), KIT and GRB2. Interacts with ROS1; mediates PTPN11 phosphorylation. Interacts with PDGFRA (tyrosine phosphorylated). Interacts with PDGFRB (tyrosine phosphorylated); this interaction increases the PTPN11 phosphatase activity. Interacts (via SH2 domain) with TEK/TIE2 (tyrosine phosphorylated). Interacts with CEACAM1 (via cytoplasmic domain); this interaction depends on the monomer/dimer equilibrium and is phosphorylation-dependent. Interacts with MPIG6B (via ITIM motif). Interacts with SIGLEC10. Interacts with Lilrb4a (when tyrosine phosphorylated). Interacts with SIGLEC10. Interacts with CLEC12B (via ITIM motif); this interaction triggers dephosphorylation and activation of PTPN11. Interacts (via SH2 domains) with NEDD9/CAS-L; the interaction is enhanced when NEDD9/CAS-L is tyrosine phosphorylated. Interacts with PIRB; when PIRB is phosphorylated by LYN at 'Tyr-794' and 'Tyr-824'. Post-translationally, phosphorylated on Tyr-542 and Tyr-580 upon receptor protein tyrosine kinase activation; which creates a binding site for GRB2 and other SH2-containing proteins. Phosphorylated upon activation of the receptor-type kinase FLT3. Phosphorylated by activated PDGFRB. Phosphorylated upon activation of the receptor-type kinase PDGFRA. As to expression, highly expressed in brain, heart and kidney.

Its subcellular location is the cytoplasm. The enzyme catalyses O-phospho-L-tyrosyl-[protein] + H2O = L-tyrosyl-[protein] + phosphate. Functionally, acts downstream of various receptor and cytoplasmic protein tyrosine kinases to participate in the signal transduction from the cell surface to the nucleus. Positively regulates MAPK signal transduction pathway. Dephosphorylates GAB1, ARHGAP35 and EGFR. Dephosphorylates ROCK2 at 'Tyr-722' resulting in stimulation of its RhoA binding activity. Dephosphorylates CDC73. Dephosphorylates SOX9 on tyrosine residues, leading to inactivate SOX9 and promote ossification. Dephosphorylates tyrosine-phosphorylated NEDD9/CAS-L. This is Tyrosine-protein phosphatase non-receptor type 11 (Ptpn11) from Mus musculus (Mouse).